We begin with the raw amino-acid sequence, 227 residues long: PKHD-type hydroxylase M446_1130 (227 aa).

One can recognise a Fe2OG dioxygenase domain in the interval 78-178 (QIFPPLFNRY…RVASFFWLQS (101 aa)). Residues His-96, Asp-98, and His-159 each coordinate Fe cation. Arg-169 is a binding site for 2-oxoglutarate.

It depends on Fe(2+) as a cofactor. L-ascorbate serves as cofactor.

In Methylobacterium sp. (strain 4-46), this protein is PKHD-type hydroxylase M446_1130.